The following is a 206-amino-acid chain: Casparian strip membrane protein 1 (206 aa).

At Ala2 the chain carries N-acetylalanine. At 2 to 43 (AKESTTIDVGEPSTVTKSSSHVVKDAKKKGFVAVASRGGAKR) the chain is on the cytoplasmic side. Residues 44 to 64 (GLAIFDFLLRLAAIAVTIGAA) traverse the membrane as a helical segment. At 65-95 (SVMYTAEETLPFFTQFLQFQAGYDDLPAFQY) the chain is on the extracellular side. Residues 96–116 (FVIAVAVVASYLVLSLPFSIV) traverse the membrane as a helical segment. Topologically, residues 117-127 (SIVRPHAVAPR) are cytoplasmic. Residues 128 to 148 (LILLICDTLVVTLNTSAAAAA) form a helical membrane-spanning segment. At 149–180 (ASITYLAHNGNQSTNWLPICQQFGDFCQNVST) the chain is on the extracellular side. 2 N-linked (GlcNAc...) asparagine glycosylation sites follow: Asn159 and Asn177. The chain crosses the membrane as a helical span at residues 181 to 201 (AVVADSIAILFFIVLIIISAI). Topologically, residues 202-206 (ALKRH) are cytoplasmic.

It belongs to the Casparian strip membrane proteins (CASP) family. Homodimer and heterodimers with other CASP proteins. Interacts with CASP2, CASP3, CASP4 and CASP5.

The protein localises to the cell membrane. Its function is as follows. Regulates membrane-cell wall junctions and localized cell wall deposition. Required for establishment of the Casparian strip membrane domain (CSD) and the subsequent formation of Casparian strips, a cell wall modification of the root endodermis that determines an apoplastic barrier between the intraorganismal apoplasm and the extraorganismal apoplasm and prevents lateral diffusion. This Arabidopsis thaliana (Mouse-ear cress) protein is Casparian strip membrane protein 1 (CASP1).